Consider the following 1254-residue polypeptide: Structural polyprotein (1254 aa).

A host transcription inhibition region spans residues 43 to 77; that stretch reads LQAQQMQQLISAVSALTTKQNVKAPKGQRKQKQQK. The segment at 60–112 is disordered; it reads TKQNVKAPKGQRKQKQQKPKEKKEKQKKKPTXKKKQQQKPKPQAKKKKPGRRE. The Nuclear localization signal motif lies at 70 to 108; sequence QRKQKQQKPKEKKEKQKKKPTXKKKQQQKPKPQAKKKKP. Positions 84–110 are enriched in basic residues; it reads KQKKKPTXKKKQQQKPKPQAKKKKPGR. The segment at 95–123 is binding to the viral RNA; it reads QQQKPKPQAKKKKPGRRERMCMKIENDCI. Residues 108–122 form a ribosome-binding region; the sequence is PGRRERMCMKIENDC. A disulfide bridge connects residues C122 and C137. The Peptidase S3 domain occupies 122 to 270; sequence CIFEVKLDGK…RVTPEGTEEW (149 aa). H148 serves as the catalytic Charge relay system. Residues 153 to 163 carry the Nuclear export signal motif; that stretch reads IDNPDLAKLTY. Residues 164–169 form an interaction with spike glycoprotein E2 region; the sequence is KKSSKY. The Charge relay system role is filled by D170. The interval 192 to 202 is dimerization of the capsid protein; the sequence is PEGHYNWHHGA. The active-site Charge relay system is the S222. Residues 228-232 are dimerization of the capsid protein; the sequence is DNKGR. Residues 270-694 lie on the Extracellular side of the membrane; sequence WSAALMMCIL…PHEIIQYYYG (425 aa). Residues 271–282 are functions as an uncleaved signal peptide for the precursor of protein E3/E2; it reads SAALMMCILANT. Intrachain disulfides connect C277–C286, C291–C295, and C294–C326. An N-linked (GlcNAc...) asparagine; by host glycan is attached at N281. N328 carries N-linked (GlcNAc...) asparagine; by host glycosylation. Disulfide bonds link C353/C459, C356/C362, C425/C439, C487/C599, C535/C559, and C537/C554. Interaction with host Mxra8 receptor stretches follow at residues 360-363 and 396-398; these read YFCY and HAH. The tract at residues 518–521 is interaction with host Mxra8 receptor; the sequence is TAGN. N534 carries N-linked (GlcNAc...) asparagine; by host glycosylation. Residues 550 to 556 are interaction with host Mxra8 receptor; it reads TINTCKI. An N-linked (GlcNAc...) asparagine; by host glycan is attached at N596. Residues 695 to 715 traverse the membrane as a helical segment; the sequence is LYPAATIAAVSGASLMALLTL. The Cytoplasmic segment spans residues 716-756; the sequence is AATCCMLATARRKCLTPYALTPGAVVPLTLGLLXCAPRANA. C719 carries the S-palmitoyl cysteine; by host lipid modification. Residues 724–728 form an interaction with the capsid protein region; sequence TARRK. S-palmitoyl cysteine; by host attachment occurs at residues C729 and C750. The transient transmembrane before p62-6K protein processing stretch occupies residues 729 to 749; the sequence is CLTPYALTPGAVVPLTLGLLX. A disulfide bridge links C729 with C750. At 757-771 the chain is on the extracellular side; it reads ASFAETMAYLWDENK. The helical transmembrane segment at 772 to 792 threads the bilayer; that stretch reads TLFWMEXXXXXXALALLACCI. Residue K793 is a topological domain, cytoplasmic. A helical membrane pass occupies residues 794-814; the sequence is SLICCCKPFSFLVLLSLGASA. Over 815-1231 the chain is Extracellular; it reads KAYEHTATIP…AMTWVQRMAS (417 aa). 4 disulfide bridges follow: C865–C930, C878–C910, C879–C912, and C884–C894. The tract at residues 900 to 917 is E1 fusion peptide loop; sequence VYPFMWGGAYCFCDSENT. N-linked (GlcNAc...) asparagine; by host glycosylation occurs at N957. Disulfide bonds link C1075–C1087, C1117–C1192, C1122–C1196, and C1144–C1186. The chain crosses the membrane as a helical span at residues 1232–1252; the sequence is GLGGLALIAVVVLVLVTCITM. A lipid anchor (S-palmitoyl cysteine; by host) is attached at C1249. A lipid anchor (S-stearoyl cysteine; by host) is attached at C1249. The Cytoplasmic segment spans residues 1253-1254; sequence RR.

Homodimer. Homomultimer. Interacts with host karyopherin KPNA4; this interaction allows the nuclear import of the viral capsid protein. Interacts with spike glycoprotein E2. Interacts with host IRAK1; the interaction leads to inhibition of IRAK1-dependent signaling. As to quaternary structure, the precursor of protein E3/E2 and E1 form a heterodimer shortly after synthesis. In terms of assembly, the precursor of protein E3/E2 and E1 form a heterodimer shortly after synthesis. Processing of the precursor of protein E3/E2 into E2 and E3 results in a heterodimer of the spike glycoproteins E2 and E1. Spike at virion surface are constituted of a trimer of E2-E1 heterodimers. After target cell attachment and endocytosis, E1 change conformation to form homotrimers. Interacts with 6K protein. Interacts with spike glycoprotein E1. Processing of the precursor of protein E3/E2 into E2 and E3 results in a heterodimer of the spike glycoproteins E2 and E1. Spike at virion surface are constituted of a trimer of E2-E1 heterodimers. Interacts with 6K protein. Interacts with host MXRA8; this interaction mediates virus entry. Post-translationally, structural polyprotein: Specific enzymatic cleavages in vivo yield mature proteins. Capsid protein is auto-cleaved during polyprotein translation, unmasking a signal peptide at the N-terminus of the precursor of E3/E2. The remaining polyprotein is then targeted to the host endoplasmic reticulum, where host signal peptidase cleaves it into pE2, 6K and E1 proteins. pE2 is further processed to mature E3 and E2 by host furin in trans-Golgi vesicle. In terms of processing, palmitoylated via thioester bonds. These palmitoylations may induce disruption of the C-terminus transmembrane. This would result in the reorientation of E2 C-terminus from lumenal to cytoplasmic side. N-glycosylated. Post-translationally, palmitoylated via thioester bonds.

The protein localises to the virion. It is found in the host cytoplasm. Its subcellular location is the host cell membrane. It localises to the host nucleus. The protein resides in the virion membrane. The protein localises to the host Golgi apparatus. It is found in the host trans-Golgi network. Its subcellular location is the host endoplasmic reticulum. It carries out the reaction Autocatalytic release of the core protein from the N-terminus of the togavirus structural polyprotein by hydrolysis of a -Trp-|-Ser- bond.. In terms of biological role, forms an icosahedral capsid with a T=4 symmetry composed of 240 copies of the capsid protein surrounded by a lipid membrane through which penetrate 80 spikes composed of trimers of E1-E2 heterodimers. The capsid protein binds to the viral RNA genome at a site adjacent to a ribosome binding site for viral genome translation following genome release. Possesses a protease activity that results in its autocatalytic cleavage from the nascent structural protein. Following its self-cleavage, the capsid protein transiently associates with ribosomes, and within several minutes the protein binds to viral RNA and rapidly assembles into icosahedric core particles. The resulting nucleocapsid eventually associates with the cytoplasmic domain of the spike glycoprotein E2 at the cell membrane, leading to budding and formation of mature virions. In case of infection, new virions attach to target cells and after clathrin-mediated endocytosis their membrane fuses with the host endosomal membrane. This leads to the release of the nucleocapsid into the cytoplasm, followed by an uncoating event necessary for the genomic RNA to become accessible. The uncoating might be triggered by the interaction of capsid proteins with ribosomes. Binding of ribosomes would release the genomic RNA since the same region is genomic RNA-binding and ribosome-binding. Specifically inhibits interleukin-1 receptor-associated kinase 1/IRAK1-dependent signaling during viral entry, representing a means by which the alphaviruses may evade innate immune detection and activation prior to viral gene expression. Its function is as follows. Provides the signal sequence for the translocation of the precursor of protein E3/E2 to the host endoplasmic reticulum. Furin-cleaved E3 remains associated with spike glycoprotein E1 and mediates pH protection of the latter during the transport via the secretory pathway. After virion release from the host cell, the assembly protein E3 is gradually released in the extracellular space. Plays a role in viral attachment to target host cell, by binding to the cell receptor MXRA8. The host LDLR may also act as a cell receptor for viral entry. Synthesized as a p62 precursor which is processed by furin at the cell membrane just before virion budding, giving rise to E2-E1 heterodimer. The p62-E1 heterodimer is stable, whereas E2-E1 is unstable and dissociate at low pH. p62 is processed at the last step, presumably to avoid E1 fusion activation before its final export to cell surface. E2 C-terminus contains a transitory transmembrane that would be disrupted by palmitoylation, resulting in reorientation of the C-terminal tail from lumenal to cytoplasmic side. This step is critical since E2 C-terminus is involved in budding by interacting with capsid proteins. This release of E2 C-terminus in cytoplasm occurs lately in protein export, and precludes premature assembly of particles at the endoplasmic reticulum membrane. Functionally, acts as a viroporin that participates in virus glycoprotein processing and transport to the plasma membrane, cell permeabilization and budding of viral particles. The cation channel is permeable to Na(+)&gt;K(+)&gt;Ca(2+) in vitro. Disrupts the calcium homeostasis of the cell, probably at the endoplasmic reticulum level. This leads to cytoplasmic calcium elevation. Because of its lipophilic properties, the 6K protein is postulated to influence the selection of lipids that interact with the transmembrane domains of the glycoproteins, which, in turn, affects the deformability of the bilayer required for the extreme curvature that occurs as budding proceeds. Present in low amount in virions, about 3% compared to viral glycoproteins. In terms of biological role, class II viral fusion protein. Fusion activity is inactive as long as E1 is bound to E2 in mature virion. After virus attachment to target cell via host MXRA8 and endocytosis, acidification of the endosome induce dissociation of E1/E2 heterodimer and concomitant trimerization of the E1 subunits. This E1 trimer is fusion active, and promotes release of viral nucleocapsid in cytoplasm after endosome and viral membrane fusion. Efficient fusion requires the presence of cholesterol and sphingolipid in the target membrane. The chain is Structural polyprotein from Ross river virus (strain NB5092) (RRV).